Here is a 373-residue protein sequence, read N- to C-terminus: Transmembrane protein adipocyte-associated 1 (373 aa).

N-linked (GlcNAc...) asparagine glycans are attached at residues asparagine 11 and asparagine 23. Transmembrane regions (helical) follow at residues 48-68, 76-96, 123-143, 151-171, 192-212, 234-254, and 265-285; these read LLLL…LPSA, SSPI…VGIA, FFLL…GHLE, VLAI…TLEI, QFWL…VILP, ILAL…FDII, and FLYF…GFFG. Asparagine 361 carries an N-linked (GlcNAc...) asparagine glycan.

The protein belongs to the UPF0359 family. As to expression, ubiquitous, with higher levels in heart, placenta and kidney.

It localises to the membrane. This chain is Transmembrane protein adipocyte-associated 1 (TPRA1), found in Homo sapiens (Human).